We begin with the raw amino-acid sequence, 454 residues long: SH2 domain-containing protein 4A (454 aa).

4 disordered regions span residues 45–65 (AMER…NGKS), 107–131 (EQEA…KSQY), 152–177 (KEEL…SSSS), and 237–302 (RKSK…AYPQ). The span at 107–120 (EQEAEEPRKTHSEE) shows a compositional bias: basic and acidic residues. 2 positions are modified to phosphoserine: Ser-118 and Ser-124. Residues 240 to 259 (KAADEKRRSLAKQAREDYKR) are compositionally biased toward basic and acidic residues. 2 positions are modified to phosphoserine: Ser-261 and Ser-315. The SH2 domain maps to 347–440 (WFHGILTLKK…LGKELLLYPC (94 aa)).

As to quaternary structure, interacts with ESR1. As to expression, ubiquitously expressed. Aberrantly expressed in some cancers.

It localises to the cytoplasm. Inhibits estrogen-induced cell proliferation by competing with PLCG for binding to ESR1, blocking the effect of estrogen on PLCG and repressing estrogen-induced proliferation. May play a role in T-cell development and function. This Homo sapiens (Human) protein is SH2 domain-containing protein 4A (SH2D4A).